The chain runs to 271 residues: Formamidopyrimidine-DNA glycosylase (271 aa).

Proline 2 acts as the Schiff-base intermediate with DNA in catalysis. Catalysis depends on glutamate 3, which acts as the Proton donor. The active-site Proton donor; for beta-elimination activity is the lysine 58. The DNA site is built by histidine 92, arginine 111, and arginine 152. The segment at 237–271 (TVYGREGEPCKQCGRVLKHAMIGQRATVWCGSCQR) adopts an FPG-type zinc-finger fold. The active-site Proton donor; for delta-elimination activity is the arginine 261.

It belongs to the FPG family. Monomer. The cofactor is Zn(2+).

It carries out the reaction Hydrolysis of DNA containing ring-opened 7-methylguanine residues, releasing 2,6-diamino-4-hydroxy-5-(N-methyl)formamidopyrimidine.. The enzyme catalyses 2'-deoxyribonucleotide-(2'-deoxyribose 5'-phosphate)-2'-deoxyribonucleotide-DNA = a 3'-end 2'-deoxyribonucleotide-(2,3-dehydro-2,3-deoxyribose 5'-phosphate)-DNA + a 5'-end 5'-phospho-2'-deoxyribonucleoside-DNA + H(+). In terms of biological role, involved in base excision repair of DNA damaged by oxidation or by mutagenic agents. Acts as a DNA glycosylase that recognizes and removes damaged bases. Has a preference for oxidized purines, such as 7,8-dihydro-8-oxoguanine (8-oxoG). Has AP (apurinic/apyrimidinic) lyase activity and introduces nicks in the DNA strand. Cleaves the DNA backbone by beta-delta elimination to generate a single-strand break at the site of the removed base with both 3'- and 5'-phosphates. The protein is Formamidopyrimidine-DNA glycosylase of Xanthomonas oryzae pv. oryzae (strain MAFF 311018).